The chain runs to 962 residues: Translation initiation factor IF-2 (962 aa).

A disordered region spans residues 99 to 365 (VKAAQTQAAP…GKKGKKLKLE (267 aa)). Residues 117–141 (DAAKARAEAAARAEARAKAEAEAAK) show a composition bias toward basic and acidic residues. The segment covering 145–155 (AKAGNKAKPAA) has biased composition (low complexity). The span at 173–216 (KPAEESKAEKAQADKMPSKKPAEPKEKAAKPKHERNGKGKDAKK) shows a compositional bias: basic and acidic residues. The span at 219 to 234 (KPAAPAVPQPVVSAEE) shows a compositional bias: low complexity. A compositionally biased stretch (basic and acidic residues) spans 235-269 (QAQRDEEARRAAALRAHQEALLKEKQERQARREAM). Positions 270–283 (KQQAEQQAKAAQEA) are enriched in low complexity. Over residues 338–354 (GGRDRNNARNGDDERVR) the composition is skewed to basic and acidic residues. The 170-residue stretch at 462 to 631 (PRPPVVTVMG…LLEAEVLELT (170 aa)) folds into the tr-type G domain. Positions 471 to 478 (GHVDHGKT) are G1. 471 to 478 (GHVDHGKT) contacts GTP. A G2 region spans residues 496 to 500 (GITQH). The interval 517–520 (DTPG) is G3. GTP-binding positions include 517–521 (DTPGH) and 571–574 (NKID). The segment at 571 to 574 (NKID) is G4. A G5 region spans residues 607–609 (SAK).

Belongs to the TRAFAC class translation factor GTPase superfamily. Classic translation factor GTPase family. IF-2 subfamily.

The protein localises to the cytoplasm. Its function is as follows. One of the essential components for the initiation of protein synthesis. Protects formylmethionyl-tRNA from spontaneous hydrolysis and promotes its binding to the 30S ribosomal subunits. Also involved in the hydrolysis of GTP during the formation of the 70S ribosomal complex. In Neisseria meningitidis serogroup C (strain 053442), this protein is Translation initiation factor IF-2.